The following is a 373-amino-acid chain: Probable neutral protease 2 homolog MCYG_05201 (373 aa).

The first 19 residues, 1-19 (MQFFTALAAVGALVAPALA), serve as a signal peptide directing secretion. Positions 20–187 (LPTQVPANQS…AHIVGTIDKR (168 aa)) are excised as a propeptide. Intrachain disulfides connect C195–C265 and C272–C290. H314 contacts Zn(2+). The active site involves E315. Residues H318 and D329 each coordinate Zn(2+).

Belongs to the peptidase M35 family. Zn(2+) serves as cofactor.

It is found in the secreted. The enzyme catalyses Preferential cleavage of bonds with hydrophobic residues in P1'. Also 3-Asn-|-Gln-4 and 8-Gly-|-Ser-9 bonds in insulin B chain.. Its function is as follows. Probable secreted metalloprotease that shows high activities on basic nuclear substrates such as histone and protamine. May be involved in virulence. The polypeptide is Probable neutral protease 2 homolog MCYG_05201 (Arthroderma otae (strain ATCC MYA-4605 / CBS 113480) (Microsporum canis)).